The following is a 346-amino-acid chain: Heparan sulfate glucosamine 3-O-sulfotransferase 5 (346 aa).

Over 1-12 (MLFKQQAWLRQK) the chain is Cytoplasmic. The helical; Signal-anchor for type II membrane protein transmembrane segment at 13–32 (LLVLGSLAVGSLLYLVARVG) threads the bilayer. Over 33-346 (SLDRLQPICP…QITGRTLNWP (314 aa)) the chain is Lumenal. 100–104 (KGGTR) serves as a coordination point for 3'-phosphoadenylyl sulfate. Substrate contacts are provided by residues 122 to 128 (EIHFFDN) and 155 to 158 (KSPA). 3'-phosphoadenylyl sulfate-binding residues include R183 and S191. 226 to 227 (YK) contacts substrate. N287 is a glycosylation site (N-linked (GlcNAc...) asparagine). Y293 lines the 3'-phosphoadenylyl sulfate pocket. Residues C294 and C304 are joined by a disulfide bond. 309 to 313 (KGRIH) lines the 3'-phosphoadenylyl sulfate pocket.

It belongs to the sulfotransferase 1 family. Highly expressed in skeletal muscle and fetal brain, and also found in adult brain, spinal cord, cerebellum and colon.

It localises to the golgi apparatus membrane. It carries out the reaction alpha-D-glucosaminyl-[heparan sulfate](n) + 3'-phosphoadenylyl sulfate = 3-sulfo-alpha-D-glucosaminyl-[heparan sulfate](n) + adenosine 3',5'-bisphosphate + H(+). In terms of biological role, sulfotransferase that utilizes 3'-phospho-5'-adenylyl sulfate (PAPS) to catalyze the transfer of a sulfo group to position 3 of glucosamine residues in heparan. Catalyzes the rate limiting step in the biosynthesis of heparan sulfate (HSact). This modification is a crucial step in the biosynthesis of anticoagulant heparan sulfate as it completes the structure of the antithrombin pentasaccharide binding site. Also generates GlcUA-GlcNS or IdoUA-GlcNS and IdoUA2S-GlcNH2. The substrate-specific O-sulfation generates an enzyme-modified heparan sulfate which acts as a binding receptor to Herpes simplex virus-1 (HSV-1) and permits its entry. This Homo sapiens (Human) protein is Heparan sulfate glucosamine 3-O-sulfotransferase 5 (HS3ST5).